We begin with the raw amino-acid sequence, 284 residues long: Homeobox protein six1 (284 aa).

Residues glycine 124–glutamate 183 constitute a DNA-binding region (homeobox). The interval valine 168 to serine 230 is disordered. Over residues aspartate 179 to threonine 190 the composition is skewed to basic and acidic residues. The segment covering glutamate 191 to glutamine 202 has biased composition (low complexity).

The protein belongs to the SIX/Sine oculis homeobox family.

The protein resides in the nucleus. The protein localises to the cytoplasm. Its function is as follows. Transcription factor that is involved in the regulation of cell proliferation, apoptosis and embryonic development. Depending on context, functions as a transcriptional repressor or activator. Required for the normal formation of pre-placodal ectoderm. The sequence is that of Homeobox protein six1 (six1) from Xenopus laevis (African clawed frog).